Consider the following 241-residue polypeptide: Small ribosomal subunit protein uS2 (241 aa).

The protein belongs to the universal ribosomal protein uS2 family.

The chain is Small ribosomal subunit protein uS2 from Pectobacterium atrosepticum (strain SCRI 1043 / ATCC BAA-672) (Erwinia carotovora subsp. atroseptica).